The chain runs to 73 residues: Omega-conotoxin GVIA (73 aa).

The N-terminal stretch at 1–22 is a signal peptide; the sequence is MKLTCVVIVAVLLLTACQLITA. The propeptide occupies 23-45; it reads DDSRGTQKHRALGSTTELSLSTR. 3 cysteine pairs are disulfide-bonded: Cys-46-Cys-61, Cys-53-Cys-64, and Cys-60-Cys-71. 4-hydroxyproline is present on residues Pro-49, Pro-55, and Pro-66. At Tyr-72 the chain carries Tyrosine amide; in form omega-conotoxin GVIA.

It belongs to the conotoxin O1 superfamily. As to expression, expressed by the venom duct.

Its subcellular location is the secreted. Its function is as follows. Omega-conotoxins act at presynaptic membranes, they bind and block voltage-gated calcium channels (Cav). This toxin blocks N-type calcium channels (Cav2.2/CACNA1B) with a high potency (it displaces [125I]GVIA with an IC(50)=3.7-38 pM). In Conus geographus (Geography cone), this protein is Omega-conotoxin GVIA.